We begin with the raw amino-acid sequence, 360 residues long: Histidinol-phosphate aminotransferase (360 aa).

N6-(pyridoxal phosphate)lysine is present on lysine 223.

The protein belongs to the class-II pyridoxal-phosphate-dependent aminotransferase family. Histidinol-phosphate aminotransferase subfamily. In terms of assembly, homodimer. Pyridoxal 5'-phosphate serves as cofactor.

The catalysed reaction is L-histidinol phosphate + 2-oxoglutarate = 3-(imidazol-4-yl)-2-oxopropyl phosphate + L-glutamate. It functions in the pathway amino-acid biosynthesis; L-histidine biosynthesis; L-histidine from 5-phospho-alpha-D-ribose 1-diphosphate: step 7/9. The chain is Histidinol-phosphate aminotransferase from Bacillus subtilis subsp. natto.